Here is a 171-residue protein sequence, read N- to C-terminus: Flavodoxin (171 aa).

A Flavodoxin-like domain is found at 4-166; that stretch reads IGLFVGTTTG…RIKEWVKQLK (163 aa).

It belongs to the flavodoxin family. FMN is required as a cofactor.

In terms of biological role, low-potential electron donor to a number of redox enzymes. The sequence is that of Flavodoxin (fld) from Trichodesmium erythraeum (strain IMS101).